The chain runs to 298 residues: Glutamyl-Q tRNA(Asp) synthetase (298 aa).

Residues 9-13 (RFAPS) and glutamate 45 each bind L-glutamate. A 'HIGH' region motif is present at residues 12-22 (PSPSGELHFGS). Residues cysteine 101, cysteine 103, tyrosine 115, and cysteine 119 each contribute to the Zn(2+) site. 2 residues coordinate L-glutamate: tyrosine 172 and arginine 190. The 'KMSKS' region motif lies at 228–232 (KLSKQ). An ATP-binding site is contributed by lysine 231.

It belongs to the class-I aminoacyl-tRNA synthetase family. GluQ subfamily. The cofactor is Zn(2+).

Catalyzes the tRNA-independent activation of glutamate in presence of ATP and the subsequent transfer of glutamate onto a tRNA(Asp). Glutamate is transferred on the 2-amino-5-(4,5-dihydroxy-2-cyclopenten-1-yl) moiety of the queuosine in the wobble position of the QUC anticodon. This Cronobacter sakazakii (strain ATCC BAA-894) (Enterobacter sakazakii) protein is Glutamyl-Q tRNA(Asp) synthetase.